The sequence spans 96 residues: Putative pterin-4-alpha-carbinolamine dehydratase (96 aa).

The protein belongs to the pterin-4-alpha-carbinolamine dehydratase family.

The enzyme catalyses (4aS,6R)-4a-hydroxy-L-erythro-5,6,7,8-tetrahydrobiopterin = (6R)-L-erythro-6,7-dihydrobiopterin + H2O. In Herpetosiphon aurantiacus (strain ATCC 23779 / DSM 785 / 114-95), this protein is Putative pterin-4-alpha-carbinolamine dehydratase.